A 312-amino-acid chain; its full sequence is NAD(P)(+)--arginine ADP-ribosyltransferase 2 (312 aa).

A signal peptide spans 1 to 20 (MELLALRWVLLAGTLLSTSA). A propeptide spanning residues 21 to 31 (ASSALQEGDLG) is cleaved from the precursor. 2 disulfide bridges follow: C51/C260 and C159/C208. Positions 71-256 (YAYAVGWRKA…IYLRSKGKMS (186 aa)) constitute a TR mART core domain. Residues Y108, R164, and Q183 each coordinate NAD(+). R164 is an active-site residue. S186 is an active-site residue. An NAD(+)-binding site is contributed by S217. E224 is a catalytic residue. The propeptide occupies 267–312 (GGQWGRGHQEVGLGLSPGLALPVLPCSNCSCWGSGHRAGDPIPAAV).

The protein belongs to the Arg-specific ADP-ribosyltransferase family.

Its subcellular location is the secreted. The protein localises to the extracellular space. The catalysed reaction is L-arginyl-[protein] + NAD(+) = N(omega)-(ADP-D-ribosyl)-L-arginyl-[protein] + nicotinamide + H(+). The sequence is that of NAD(P)(+)--arginine ADP-ribosyltransferase 2 from Gallus gallus (Chicken).